The sequence spans 90 residues: Defensin-like protein 293 (90 aa).

A signal peptide spans Met1–Ala26. 3 cysteine pairs are disulfide-bonded: Cys63–Cys83, Cys69–Cys88, and Cys75–Cys90.

Belongs to the DEFL family.

It is found in the secreted. This is Defensin-like protein 293 from Arabidopsis thaliana (Mouse-ear cress).